We begin with the raw amino-acid sequence, 162 residues long: ATP synthase subunit b', chloroplastic (162 aa).

A helical transmembrane segment spans residues 26-46 (ATLPLQALQFILLTVLLTFIF).

The protein belongs to the ATPase B chain family. F-type ATPases have 2 components, F(1) - the catalytic core - and F(0) - the membrane proton channel. F(1) has five subunits: alpha(3), beta(3), gamma(1), delta(1), epsilon(1). F(0) has four main subunits: a(1), b(1), b'(1) and c(10-14). The alpha and beta chains form an alternating ring which encloses part of the gamma chain. F(1) is attached to F(0) by a central stalk formed by the gamma and epsilon chains, while a peripheral stalk is formed by the delta, b and b' chains.

It is found in the plastid. The protein localises to the chloroplast thylakoid membrane. In terms of biological role, f(1)F(0) ATP synthase produces ATP from ADP in the presence of a proton or sodium gradient. F-type ATPases consist of two structural domains, F(1) containing the extramembraneous catalytic core and F(0) containing the membrane proton channel, linked together by a central stalk and a peripheral stalk. During catalysis, ATP synthesis in the catalytic domain of F(1) is coupled via a rotary mechanism of the central stalk subunits to proton translocation. Component of the F(0) channel, it forms part of the peripheral stalk, linking F(1) to F(0). The b'-subunit is a diverged and duplicated form of b found in plants and photosynthetic bacteria. This chain is ATP synthase subunit b', chloroplastic, found in Emiliania huxleyi (Coccolithophore).